The sequence spans 159 residues: 2-C-methyl-D-erythritol 2,4-cyclodiphosphate synthase (159 aa).

The a divalent metal cation site is built by D8 and H10. 4-CDP-2-C-methyl-D-erythritol 2-phosphate contacts are provided by residues 8–10 (DVH) and 34–35 (HS). An a divalent metal cation-binding site is contributed by H42. 4-CDP-2-C-methyl-D-erythritol 2-phosphate contacts are provided by residues 56–58 (DIG), 61–65 (FPDTD), 100–106 (AQAPKMA), 132–135 (TTSE), F139, and R142.

Belongs to the IspF family. As to quaternary structure, homotrimer. A divalent metal cation is required as a cofactor.

The enzyme catalyses 4-CDP-2-C-methyl-D-erythritol 2-phosphate = 2-C-methyl-D-erythritol 2,4-cyclic diphosphate + CMP. Its pathway is isoprenoid biosynthesis; isopentenyl diphosphate biosynthesis via DXP pathway; isopentenyl diphosphate from 1-deoxy-D-xylulose 5-phosphate: step 4/6. Functionally, involved in the biosynthesis of isopentenyl diphosphate (IPP) and dimethylallyl diphosphate (DMAPP), two major building blocks of isoprenoid compounds. Catalyzes the conversion of 4-diphosphocytidyl-2-C-methyl-D-erythritol 2-phosphate (CDP-ME2P) to 2-C-methyl-D-erythritol 2,4-cyclodiphosphate (ME-CPP) with a corresponding release of cytidine 5-monophosphate (CMP). This chain is 2-C-methyl-D-erythritol 2,4-cyclodiphosphate synthase, found in Aliivibrio salmonicida (strain LFI1238) (Vibrio salmonicida (strain LFI1238)).